Here is a 987-residue protein sequence, read N- to C-terminus: Pentatricopeptide repeat-containing protein At1g06710, mitochondrial (987 aa).

Residues 1-42 (MNKTVVRCLLSRSHHPLIHFSTNLSLLHRVFTCSRYLTARFM) constitute a mitochondrion transit peptide. PPR repeat units follow at residues 164-198 (TAPV…DKEV), 199-233 (FGEF…RFRP), 234-268 (SRST…NLRM), 269-299 (DGFT…ENFV), 301-335 (DTVF…SCLP), 336-370 (NVVT…GCYP), 371-405 (SPKI…GHMP), 406-446 (GYVV…GVVL), 447-481 (NKIN…GFIP), 482-516 (DTST…GLVA), 517-551 (DVYT…GCTP), 552-586 (NVVT…GCLP), 587-621 (NIVT…KDVP), 638-672 (NVVT…GCEP), 673-707 (NQIV…GFPA), 708-742 (TLYT…SCAP), 743-777 (NVVI…GCQP), 778-812 (NVVT…GVAP), 813-847 (NYVT…HWPT), 881-915 (FLSV…SATL), 918-952 (YSST…GVIP), and 953-987 (EMQS…VCPL).

This sequence belongs to the PPR family. P subfamily.

It is found in the mitochondrion. The chain is Pentatricopeptide repeat-containing protein At1g06710, mitochondrial from Arabidopsis thaliana (Mouse-ear cress).